Consider the following 155-residue polypeptide: UPF0260 protein R01011 (155 aa).

This sequence belongs to the UPF0260 family.

This Rhizobium meliloti (strain 1021) (Ensifer meliloti) protein is UPF0260 protein R01011.